Here is a 601-residue protein sequence, read N- to C-terminus: Bifunctional protein GlmU (601 aa).

A pyrophosphorylase region spans residues 1–375 (MKSDLAIVIL…SELLLGVNNR (375 aa)). Residues 10–13 (LAAG), K24, Q75, and 81–82 (GT) each bind UDP-N-acetyl-alpha-D-glucosamine. D165 lines the Mg(2+) pocket. UDP-N-acetyl-alpha-D-glucosamine-binding residues include G201, E216, N230, and N373. N373 serves as a coordination point for Mg(2+). The segment at 376 to 396 (VQLAKTEKILNDQIIKRWQLY) is linker. Residues 397 to 601 (GVTIKSPETT…PKWAENRGDG (205 aa)) are N-acetyltransferase. Residues R478 and K496 each contribute to the UDP-N-acetyl-alpha-D-glucosamine site. Residue H508 is the Proton acceptor of the active site. Positions 511 and 522 each coordinate UDP-N-acetyl-alpha-D-glucosamine. Residues A525, 531-532 (NY), and A568 each bind acetyl-CoA.

The protein in the N-terminal section; belongs to the N-acetylglucosamine-1-phosphate uridyltransferase family. It in the C-terminal section; belongs to the transferase hexapeptide repeat family. As to quaternary structure, homotrimer. Mg(2+) serves as cofactor.

The protein resides in the cytoplasm. It carries out the reaction alpha-D-glucosamine 1-phosphate + acetyl-CoA = N-acetyl-alpha-D-glucosamine 1-phosphate + CoA + H(+). It catalyses the reaction N-acetyl-alpha-D-glucosamine 1-phosphate + UTP + H(+) = UDP-N-acetyl-alpha-D-glucosamine + diphosphate. It functions in the pathway nucleotide-sugar biosynthesis; UDP-N-acetyl-alpha-D-glucosamine biosynthesis; N-acetyl-alpha-D-glucosamine 1-phosphate from alpha-D-glucosamine 6-phosphate (route II): step 2/2. Its pathway is nucleotide-sugar biosynthesis; UDP-N-acetyl-alpha-D-glucosamine biosynthesis; UDP-N-acetyl-alpha-D-glucosamine from N-acetyl-alpha-D-glucosamine 1-phosphate: step 1/1. It participates in bacterial outer membrane biogenesis; LPS lipid A biosynthesis. Catalyzes the last two sequential reactions in the de novo biosynthetic pathway for UDP-N-acetylglucosamine (UDP-GlcNAc). The C-terminal domain catalyzes the transfer of acetyl group from acetyl coenzyme A to glucosamine-1-phosphate (GlcN-1-P) to produce N-acetylglucosamine-1-phosphate (GlcNAc-1-P), which is converted into UDP-GlcNAc by the transfer of uridine 5-monophosphate (from uridine 5-triphosphate), a reaction catalyzed by the N-terminal domain. This is Bifunctional protein GlmU from Tropheryma whipplei (strain TW08/27) (Whipple's bacillus).